A 203-amino-acid chain; its full sequence is Cilia- and flagella-associated protein 20 (203 aa).

Belongs to the CFAP20 family.

It is found in the nucleus. It localises to the cytoplasm. Its subcellular location is the cytoskeleton. The protein resides in the microtubule organizing center. The protein localises to the centrosome. It is found in the centriole. It localises to the cilium basal body. Its subcellular location is the cilium axoneme. Its function is as follows. Cilium- and flagellum-specific protein that plays a role in axonemal structure organization and motility. Microtubule inner protein (MIP) part of the dynein-decorated doublet microtubules (DMTs) in cilia axoneme, which is required for motile cilia beating. Involved in the regulation of the size and morphology of cilia. Required for axonemal microtubules polyglutamylation. The sequence is that of Cilia- and flagella-associated protein 20 from Caenorhabditis briggsae.